A 279-amino-acid chain; its full sequence is Energy-coupling factor transporter ATP-binding protein EcfA1 (279 aa).

Positions 5-240 (IELNNIQFNY…GEALVEMGLD (236 aa)) constitute an ABC transporter domain. 40 to 47 (GHNGSGKS) serves as a coordination point for ATP.

This sequence belongs to the ABC transporter superfamily. Energy-coupling factor EcfA family. In terms of assembly, forms a stable energy-coupling factor (ECF) transporter complex composed of 2 membrane-embedded substrate-binding proteins (S component), 2 ATP-binding proteins (A component) and 2 transmembrane proteins (T component).

The protein resides in the cell membrane. Its function is as follows. ATP-binding (A) component of a common energy-coupling factor (ECF) ABC-transporter complex. Unlike classic ABC transporters this ECF transporter provides the energy necessary to transport a number of different substrates. This is Energy-coupling factor transporter ATP-binding protein EcfA1 from Enterococcus faecalis (strain ATCC 700802 / V583).